The primary structure comprises 645 residues: 1-deoxy-D-xylulose-5-phosphate synthase 2 (645 aa).

Thiamine diphosphate contacts are provided by residues His79 and 120–122 (GHS). Asp151 contributes to the Mg(2+) binding site. Thiamine diphosphate contacts are provided by residues 152–153 (GS), Asn180, Tyr291, and Glu373. Asn180 provides a ligand contact to Mg(2+).

This sequence belongs to the transketolase family. DXPS subfamily. In terms of assembly, homodimer. Requires Mg(2+) as cofactor. The cofactor is thiamine diphosphate.

It catalyses the reaction D-glyceraldehyde 3-phosphate + pyruvate + H(+) = 1-deoxy-D-xylulose 5-phosphate + CO2. Its pathway is metabolic intermediate biosynthesis; 1-deoxy-D-xylulose 5-phosphate biosynthesis; 1-deoxy-D-xylulose 5-phosphate from D-glyceraldehyde 3-phosphate and pyruvate: step 1/1. Catalyzes the acyloin condensation reaction between C atoms 2 and 3 of pyruvate and glyceraldehyde 3-phosphate to yield 1-deoxy-D-xylulose-5-phosphate (DXP). The protein is 1-deoxy-D-xylulose-5-phosphate synthase 2 of Rhodospirillum rubrum (strain ATCC 11170 / ATH 1.1.1 / DSM 467 / LMG 4362 / NCIMB 8255 / S1).